Here is a 384-residue protein sequence, read N- to C-terminus: Calreticulin-3 (384 aa).

A signal peptide spans 1-19 (MARALVQLWAICMLRVALA). Residues 20–197 (TVYFQEEFLD…GQSIESGSIE (178 aa)) are N-domain. N-linked (GlcNAc...) asparagine glycosylation occurs at asparagine 42. A disulfide bond links cysteine 105 and cysteine 137. Positions 109, 111, 128, and 135 each coordinate an alpha-D-glucoside. 7 tandem repeats follow at residues 191–202 (IESGSIEYDWNL), 208–219 (ETSPAESKDWEQ), 221–230 (KDNKAQDWEK), 234–245 (DASTSKQSDWNG), 249–259 (GDWPAPMLQKP), 263–271 (DGLKPEGIH), and 273–283 (DVWLHRKMKNT). A 4 X approximate repeats region spans residues 191 to 245 (IESGSIEYDWNLTSLKKETSPAESKDWEQTKDNKAQDWEKHFLDASTSKQSDWNG). A P-domain region spans residues 198 to 294 (YDWNLTSLKK…YLTQYDLSEF (97 aa)). N-linked (GlcNAc...) asparagine glycosylation occurs at asparagine 201. A 3 X approximate repeats region spans residues 249 to 283 (GDWPAPMLQKPPYQDGLKPEGIHKDVWLHRKMKNT). Residues 295–384 (ENIGAIGLEL…FNQFHRRNEL (90 aa)) form a C-domain region. Glutamate 303 provides a ligand contact to an alpha-D-glucoside. The short motif at 381–384 (RNEL) is the Prevents secretion from ER element.

It belongs to the calreticulin family. In terms of assembly, component of an EIF2 complex at least composed of CELF1/CUGBP1, CALR, CALR3, EIF2S1, EIF2S2, HSP90B1 and HSPA5. As to expression, testis specific.

It is found in the endoplasmic reticulum lumen. Its function is as follows. During spermatogenesis, may act as a lectin-independent chaperone for specific client proteins such as ADAM3. Required for sperm fertility. CALR3 capacity for calcium-binding may be absent or much lower than that of CALR. This is Calreticulin-3 (CALR3) from Homo sapiens (Human).